We begin with the raw amino-acid sequence, 150 residues long: Lipoprotein signal peptidase (150 aa).

3 helical membrane-spanning segments follow: residues L5–V25, Q59–W79, and A83–I103. Catalysis depends on residues D113 and D129. Residues I124–L144 traverse the membrane as a helical segment.

Belongs to the peptidase A8 family.

It localises to the cell membrane. It catalyses the reaction Release of signal peptides from bacterial membrane prolipoproteins. Hydrolyzes -Xaa-Yaa-Zaa-|-(S,diacylglyceryl)Cys-, in which Xaa is hydrophobic (preferably Leu), and Yaa (Ala or Ser) and Zaa (Gly or Ala) have small, neutral side chains.. It functions in the pathway protein modification; lipoprotein biosynthesis (signal peptide cleavage). Functionally, this protein specifically catalyzes the removal of signal peptides from prolipoproteins. In Lactococcus lactis subsp. lactis (strain IL1403) (Streptococcus lactis), this protein is Lipoprotein signal peptidase.